Consider the following 711-residue polypeptide: Catalase HPII (711 aa).

Residues 1–10 are compositionally biased toward basic and acidic residues; it reads MPSKKTDAPK. The segment at 1-27 is disordered; sequence MPSKKTDAPKQSEAAGTQTPDRANTNA. The span at 14–27 shows a compositional bias: polar residues; sequence AAGTQTPDRANTNA. Active-site residues include H92 and N165. Heme is bound at residue Y379.

Belongs to the catalase family. HPII subfamily. Heme serves as cofactor.

Its subcellular location is the cytoplasm. It carries out the reaction 2 H2O2 = O2 + 2 H2O. Its function is as follows. Decomposes hydrogen peroxide into water and oxygen; serves to protect cells from the toxic effects of hydrogen peroxide. This Pseudomonas putida (Arthrobacter siderocapsulatus) protein is Catalase HPII (katE).